Reading from the N-terminus, the 185-residue chain is Ribosome-recycling factor (185 aa).

Residues 138-157 form a disordered region; it reads ELKKLEKDHTASEDEVKRAQ.

This sequence belongs to the RRF family.

Its subcellular location is the cytoplasm. Its function is as follows. Responsible for the release of ribosomes from messenger RNA at the termination of protein biosynthesis. May increase the efficiency of translation by recycling ribosomes from one round of translation to another. The polypeptide is Ribosome-recycling factor (Desulfitobacterium hafniense (strain DSM 10664 / DCB-2)).